A 253-amino-acid polypeptide reads, in one-letter code: Lys-63-specific deubiquitinase BRCC36 (253 aa).

Residues 9–145 (VELQTDVYMV…KEHEIFLNCF (137 aa)) enclose the MPN domain. Zn(2+)-binding residues include His94, His96, and Asp107. Positions 94 to 107 (HSHPHITVCPSHVD) match the JAMM motif motif. Residues 227 to 249 (EKRIALNKLRATHLQRQLQELQK) adopt a coiled-coil conformation.

The protein belongs to the peptidase M67A family. BRCC36 subfamily. As to quaternary structure, component of the BRISC complex, at least composed of ABRAXAS2, BRCC3/BRCC36, BABAM2 and BABAM1/NBA1. Within the complex, interacts directly with ABRAXAS2. The heterodimer with ABRAXAS2 assembles into a heterotetramer. The BRISC complex binds polyubiquitin. Requires Zn(2+) as cofactor.

The protein localises to the cytoplasm. The protein resides in the nucleus. Its subcellular location is the cytoskeleton. It localises to the spindle pole. In terms of biological role, metalloprotease that specifically cleaves 'Lys-63'-linked polyubiquitin chains, leaving the last ubiquitin chain attached to its substrates. Catalytic subunit of the BRISC complex; does not have activity by itself, but needs to be associated into a heterotetramer with ABRAXAS2 for minimal in vitro activity. Plays a role in regulating the onset of apoptosis via its role in modulating 'Lys-63'-linked ubiquitination of target proteins. Required for normal mitotic spindle assembly and microtubule attachment to kinetochores via its role in deubiquitinating spindle assembly factors. This Camponotus floridanus (Florida carpenter ant) protein is Lys-63-specific deubiquitinase BRCC36.